A 331-amino-acid chain; its full sequence is Adenosine deaminase (331 aa).

Histidine 12 and histidine 14 together coordinate Zn(2+). Substrate is bound by residues histidine 14, aspartate 16, and glycine 170. Histidine 197 is a Zn(2+) binding site. Glutamate 200 serves as the catalytic Proton donor. Residue aspartate 278 participates in Zn(2+) binding. Substrate is bound at residue aspartate 279.

This sequence belongs to the metallo-dependent hydrolases superfamily. Adenosine and AMP deaminases family. Adenosine deaminase subfamily. Zn(2+) serves as cofactor.

The catalysed reaction is adenosine + H2O + H(+) = inosine + NH4(+). It carries out the reaction 2'-deoxyadenosine + H2O + H(+) = 2'-deoxyinosine + NH4(+). Catalyzes the hydrolytic deamination of adenosine and 2-deoxyadenosine. The protein is Adenosine deaminase of Shewanella sp. (strain W3-18-1).